A 164-amino-acid chain; its full sequence is Cyclic pyranopterin monophosphate synthase (164 aa).

Substrate contacts are provided by residues Leu-77–His-79 and Met-115–Glu-116. The active site involves Asp-130.

This sequence belongs to the MoaC family. Homohexamer; trimer of dimers.

The enzyme catalyses (8S)-3',8-cyclo-7,8-dihydroguanosine 5'-triphosphate = cyclic pyranopterin phosphate + diphosphate. Its pathway is cofactor biosynthesis; molybdopterin biosynthesis. Catalyzes the conversion of (8S)-3',8-cyclo-7,8-dihydroguanosine 5'-triphosphate to cyclic pyranopterin monophosphate (cPMP). This is Cyclic pyranopterin monophosphate synthase from Sinorhizobium medicae (strain WSM419) (Ensifer medicae).